The following is a 246-amino-acid chain: MLNLQNVIINPLFEISEVSVGEHYYWEIAGYEVHGQVLLTSWFVLGTVILFGLIANKDLKPLPEGLQNFSELVTEFIRDLAKTQVGEEEYLKWVPFIGTIFIFVLVSNWSGALLPWRLIEIPNGELAAPTNDINTTVALALLTSISYFYAGIRKKGLGYFKRYVQPAVFLLPINVLEDFSKPLSLSFRLFGNILADELVVGVLVALVPLIVPIPVMLLGVFTSAIQALVFATLAGAYIGESVEDHH.

Transmembrane regions (helical) follow at residues 35 to 55, 94 to 114, 132 to 152, 198 to 218, and 219 to 239; these read GQVLLTSWFVLGTVILFGLIA, VPFIGTIFIFVLVSNWSGALL, DINTTVALALLTSISYFYAGI, LVVGVLVALVPLIVPIPVMLL, and GVFTSAIQALVFATLAGAYIG.

It belongs to the ATPase A chain family. In terms of assembly, F-type ATPases have 2 components, CF(1) - the catalytic core - and CF(0) - the membrane proton channel. CF(1) has five subunits: alpha(3), beta(3), gamma(1), delta(1), epsilon(1). CF(0) has four main subunits: a, b, b' and c.

The protein resides in the plastid. The protein localises to the chloroplast thylakoid membrane. Key component of the proton channel; it plays a direct role in the translocation of protons across the membrane. The chain is ATP synthase subunit a, chloroplastic from Stigeoclonium helveticum (Green alga).